The primary structure comprises 605 residues: NADH-ubiquinone oxidoreductase chain 5 (605 aa).

A run of 15 helical transmembrane segments spans residues 8–28 (TLLSLLILTVPIMASNFYPYT), 34–54 (IYVKTMVSYAFLVSLIPTMIF), 87–107 (MILMPVALSVTWSIMEFSMWY), 117–137 (FFKYLLLFLITMMLLVTANNL), 140–160 (LFIGWEGVGIMSFLLIGWWYG), 171–191 (AILYNRIGDVGFLVAMAWFLF), 241–261 (TPVSALLHSSTMVVAGIFLLI), 273–293 (IQTMMLCLGAITTLFTAICAL), 301–321 (IVAFSTSSQLGLMMVTVGINQ), 324–344 (LAFLHICTHAFFKAMLFLCSG), 366–386 (LPFTTTALITGSLALTGMPFL), 409–429 (LFITLIATSLTAVYSTRIIYF), 457–477 (LLVGSIFAGFFISNNITPTTI), 482–502 (MPTYLKTTAMLVTLLGFIVAL), and 584–604 (IKLYFLSFLITLTLSLIMLNF).

This sequence belongs to the complex I subunit 5 family. Core subunit of respiratory chain NADH dehydrogenase (Complex I) which is composed of 45 different subunits.

The protein resides in the mitochondrion inner membrane. It catalyses the reaction a ubiquinone + NADH + 5 H(+)(in) = a ubiquinol + NAD(+) + 4 H(+)(out). Its function is as follows. Core subunit of the mitochondrial membrane respiratory chain NADH dehydrogenase (Complex I) which catalyzes electron transfer from NADH through the respiratory chain, using ubiquinone as an electron acceptor. Essential for the catalytic activity and assembly of complex I. The polypeptide is NADH-ubiquinone oxidoreductase chain 5 (MT-ND5) (Rousettus amplexicaudatus (Common rousette)).